The following is a 79-amino-acid chain: Putative antitoxin VapB1 (79 aa).

Functionally, antitoxin component of a possible type II toxin-antitoxin (TA) system. The cognate toxin is VapC1. The protein is Putative antitoxin VapB1 (vapB1) of Mycobacterium tuberculosis (strain ATCC 25618 / H37Rv).